Reading from the N-terminus, the 340-residue chain is MAKRNAVVVTHTRLRQTGTVVAEAVSQLRVAGFEVAIIDNTEAPDFGVQPPCVSDDTEIVVVLGGDGTILRAAELVHCTQVPILGVNMGHVGFLAEFESFQIDEAIRRVSTHDYSIDERMIAHVDVWLPGATKPIEDWALNDITLERADRGKMVELSIRVDDVEMNSFGADGVIVSTPTGSTAYAFSAGGPVMWPNVKALQLIPLAAHALFARPLIIGSGSTFTIDILDDSMSEGWICCDGRRQRALPQGTRVMVRESRDTLRLARLSGVPFTNRLVSKFDLPVVGWREHARNEASSQSLHHGHTFPAAAYAAGVAVAGDAGVAGTEPDKPGERDGKAGS.

The Proton acceptor role is filled by Asp-66. NAD(+) is bound by residues 66-67 (DG), Arg-71, 141-142 (ND), Lys-152, Asp-171, 182-187 (TAYAFS), and Ala-206. The disordered stretch occupies residues 321–340 (AGVAGTEPDKPGERDGKAGS). The span at 327–340 (EPDKPGERDGKAGS) shows a compositional bias: basic and acidic residues.

This sequence belongs to the NAD kinase family. A divalent metal cation is required as a cofactor.

The protein localises to the cytoplasm. It catalyses the reaction NAD(+) + ATP = ADP + NADP(+) + H(+). Functionally, involved in the regulation of the intracellular balance of NAD and NADP, and is a key enzyme in the biosynthesis of NADP. Catalyzes specifically the phosphorylation on 2'-hydroxyl of the adenosine moiety of NAD to yield NADP. This chain is NAD kinase, found in Bifidobacterium longum (strain DJO10A).